The sequence spans 253 residues: Ribosome-inactivating protein saporin-5 (253 aa).

Glu-176 is a catalytic residue.

It belongs to the ribosome-inactivating protein family. Type 1 RIP subfamily.

The enzyme catalyses Endohydrolysis of the N-glycosidic bond at one specific adenosine on the 28S rRNA.. In terms of biological role, ribosome-inactivating protein of type 1, inhibits protein synthesis in animal cells. The polypeptide is Ribosome-inactivating protein saporin-5 (SAP5) (Saponaria officinalis (Common soapwort)).